We begin with the raw amino-acid sequence, 123 residues long: Succinate dehydrogenase assembly factor 3, mitochondrial (123 aa).

Residues Met1–Leu31 constitute a mitochondrion transit peptide.

It belongs to the complex I LYR family. SDHAF3 subfamily. Interacts with sdhb within an sdha-sdhb subcomplex.

It localises to the mitochondrion matrix. Plays an essential role in the assembly of succinate dehydrogenase (SDH), an enzyme complex (also referred to as respiratory complex II) that is a component of both the tricarboxylic acid (TCA) cycle and the mitochondrial electron transport chain, and which couples the oxidation of succinate to fumarate with the reduction of ubiquinone (coenzyme Q) to ubiquinol. Promotes maturation of the iron-sulfur protein subunit sdhb of the SDH catalytic dimer, protecting it from the deleterious effects of oxidants. May act together with SDHAF1. This is Succinate dehydrogenase assembly factor 3, mitochondrial from Danio rerio (Zebrafish).